A 362-amino-acid chain; its full sequence is uncharacterized protein (362 aa).

Ala2 carries the N-acetylalanine modification.

This sequence belongs to the Gfo/Idh/MocA family. Homodimer.

This is an uncharacterized protein from Arabidopsis thaliana (Mouse-ear cress).